Consider the following 254-residue polypeptide: Coenzyme F420:L-glutamate ligase (254 aa).

Residues 11–14 (IPLI), 40–41 (ST), and Lys45 contribute to the GTP site. Asp109 provides a ligand contact to a divalent metal cation. A GTP-binding site is contributed by Asn112. A divalent metal cation is bound by residues Asp150, Thr151, and Glu208. 206-213 (MGEGAGGI) contacts GTP.

It belongs to the CofE family. In terms of assembly, homodimer. Mg(2+) serves as cofactor. It depends on Mn(2+) as a cofactor. K(+) is required as a cofactor.

It carries out the reaction oxidized coenzyme F420-0 + GTP + L-glutamate = oxidized coenzyme F420-1 + GDP + phosphate + H(+). The enzyme catalyses oxidized coenzyme F420-1 + GTP + L-glutamate = oxidized coenzyme F420-2 + GDP + phosphate + H(+). It functions in the pathway cofactor biosynthesis; coenzyme F420 biosynthesis. Its function is as follows. Catalyzes the GTP-dependent successive addition of two or more gamma-linked L-glutamates to the L-lactyl phosphodiester of 7,8-didemethyl-8-hydroxy-5-deazariboflavin (F420-0) to form coenzyme F420-0-glutamyl-glutamate (F420-2) or polyglutamated F420 derivatives. The chain is Coenzyme F420:L-glutamate ligase from Methanosarcina mazei (strain ATCC BAA-159 / DSM 3647 / Goe1 / Go1 / JCM 11833 / OCM 88) (Methanosarcina frisia).